Consider the following 316-residue polypeptide: MGNRHAKASSPQGFDVDRDAKKLNKACKGMGTNEAAIIEILSGRTSDERQQIKQKYKATYGKELEEVLKSELSGNFEKTALALLDRPSEYAARQLQKAMKGLGTDESVLIEVLCTRTNKEIIAIKEAYQRLFDRSLESDVKGDTSGNLKKILVSLLQANRNEGDDVDKDLAGQDAKDLYDAGEGRWGTDELAFNEVLAKRSYKQLRATFQAYQILIGKDIEEAIEEETSGDLQKAYLTLVRCAQDCEDYFAERLYKSMKGAGTDEETLIRIVVTRAEVDLQGIKAKFQEKYQKSLSDMVRSDTSGDFRKLLVALLH.

The N-myristoyl glycine moiety is linked to residue Gly2. Annexin repeat units lie at residues 14–85 (FDVD…ALLD), 86–157 (RPSE…SLLQ), 169–241 (DLAG…TLVR), and 245–316 (DCED…ALLH).

It belongs to the annexin family. As to quaternary structure, monomer and homodimer. Detected in epithelial cells in colon and jejunum (at protein level). Detected in epithelial cells in jejunum.

The protein resides in the apical cell membrane. Its subcellular location is the cell membrane. The protein localises to the cytoplasmic vesicle. Binds to membranes enriched in phosphatidylserine or phosphatidylglycerol in a calcium-dependent manner. Half-maximal membrane binding requires about 60 uM calcium. Does not bind to membranes that lack phospholipids with an acidic headgroup. Its function is as follows. Binds to membranes enriched in phosphatidylserine or phosphatidylglycerol in a calcium-dependent manner, but requires higher calcium levels for membrane binding than isoform A. Half-maximal membrane binding requires about 320 uM calcium. The sequence is that of Annexin A13 (ANXA13) from Homo sapiens (Human).